The following is a 236-amino-acid chain: Three prime repair exonuclease 2 (236 aa).

Asp14 and Glu16 together coordinate Mg(2+). Substrate-binding positions include 16-17 (EA) and Tyr122. Catalysis depends on His188, which acts as the Proton donor/acceptor. Position 193 (Asp193) interacts with Mg(2+). Position 193 (Asp193) interacts with substrate.

This sequence belongs to the exonuclease superfamily. TREX family. In terms of assembly, homodimer. The cofactor is Mg(2+).

The protein localises to the nucleus. The catalysed reaction is Exonucleolytic cleavage in the 3'- to 5'-direction to yield nucleoside 5'-phosphates.. Exonuclease with a preference for double-stranded DNA with mismatched 3' termini. May play a role in DNA repair. This chain is Three prime repair exonuclease 2 (Trex2), found in Mus musculus (Mouse).